The chain runs to 266 residues: 5'-nucleotidase SurE (266 aa).

D8, D9, S42, and N98 together coordinate a divalent metal cation.

It belongs to the SurE nucleotidase family. A divalent metal cation is required as a cofactor.

It localises to the cytoplasm. It catalyses the reaction a ribonucleoside 5'-phosphate + H2O = a ribonucleoside + phosphate. In terms of biological role, nucleotidase that shows phosphatase activity on nucleoside 5'-monophosphates. In Methanocaldococcus jannaschii (strain ATCC 43067 / DSM 2661 / JAL-1 / JCM 10045 / NBRC 100440) (Methanococcus jannaschii), this protein is 5'-nucleotidase SurE.